Reading from the N-terminus, the 78-residue chain is Acyl carrier protein (78 aa).

Residues 2–77 (SDIEQRVKQA…SAIDYVTKKL (76 aa)) form the Carrier domain. Serine 37 is modified (O-(pantetheine 4'-phosphoryl)serine).

It belongs to the acyl carrier protein (ACP) family. 4'-phosphopantetheine is transferred from CoA to a specific serine of apo-ACP by AcpS. This modification is essential for activity because fatty acids are bound in thioester linkage to the sulfhydryl of the prosthetic group.

It localises to the cytoplasm. The protein operates within lipid metabolism; fatty acid biosynthesis. Functionally, carrier of the growing fatty acid chain in fatty acid biosynthesis. This is Acyl carrier protein from Acinetobacter baylyi (strain ATCC 33305 / BD413 / ADP1).